A 712-amino-acid chain; its full sequence is Ribosome-releasing factor 2, mitochondrial (712 aa).

A mitochondrion-targeting transit peptide spans 1-29 (MLRCAWQNGPRQSNRWLRHLSNQIWKRSY). Residues 31–310 (SKIRNIGILA…AVNSYLPAPE (280 aa)) form the tr-type G domain. GTP is bound by residues 40 to 47 (AHIDAGKT), 104 to 108 (DTPGH), and 158 to 161 (NKMD).

Belongs to the TRAFAC class translation factor GTPase superfamily. Classic translation factor GTPase family. EF-G/EF-2 subfamily.

It is found in the mitochondrion. Its function is as follows. Mitochondrial GTPase that mediates the disassembly of ribosomes from messenger RNA at the termination of mitochondrial protein biosynthesis. Not involved in the GTP-dependent ribosomal translocation step during translation elongation. This is Ribosome-releasing factor 2, mitochondrial from Drosophila yakuba (Fruit fly).